Here is a 535-residue protein sequence, read N- to C-terminus: uncharacterized protein (535 aa).

The next 2 membrane-spanning stretches (helical) occupy residues D7 to A27 and G509 to A529.

It localises to the cell membrane. This is an uncharacterized protein from Mycobacterium bovis (strain ATCC BAA-935 / AF2122/97).